A 146-amino-acid polypeptide reads, in one-letter code: Hemoglobin subunit beta-1 (146 aa).

The 145-residue stretch at 2–146 (GLTAHDRQLI…IADALGKGYH (145 aa)) folds into the Globin domain. Residues H63 and H92 each contribute to the heme b site.

This sequence belongs to the globin family. As to quaternary structure, heterotetramer of two alpha chains and two beta chains. As to expression, red blood cells.

Involved in oxygen transport from the lung to the various peripheral tissues. The polypeptide is Hemoglobin subunit beta-1 (hbb1) (Xenopus borealis (Kenyan clawed frog)).